Reading from the N-terminus, the 66-residue chain is Large ribosomal subunit protein bL33B (66 aa).

The protein belongs to the bacterial ribosomal protein bL33 family.

The polypeptide is Large ribosomal subunit protein bL33B (Synechococcus sp. (strain CC9605)).